The sequence spans 425 residues: Probable proline--tRNA ligase, mitochondrial (425 aa).

This sequence belongs to the class-II aminoacyl-tRNA synthetase family.

The protein resides in the mitochondrion. The enzyme catalyses tRNA(Pro) + L-proline + ATP = L-prolyl-tRNA(Pro) + AMP + diphosphate. This chain is Probable proline--tRNA ligase, mitochondrial, found in Schizosaccharomyces pombe (strain 972 / ATCC 24843) (Fission yeast).